The primary structure comprises 1210 residues: Adenine-specific methyltransferase PglX (1210 aa).

Positions 1181-1194 (KQGEHGLTDDDLRG) are enriched in basic and acidic residues. Positions 1181 to 1210 (KQGEHGLTDDDLRGWRPPAATRRRRAAAKQ) are disordered. Over residues 1201-1210 (TRRRRAAAKQ) the composition is skewed to basic residues.

Belongs to the methyltransferase superfamily. PglX adenine methyltransferase family.

The catalysed reaction is a 2'-deoxyadenosine in DNA + S-adenosyl-L-methionine = an N(6)-methyl-2'-deoxyadenosine in DNA + S-adenosyl-L-homocysteine + H(+). In terms of biological role, BREX systems (bacteriophage exclusion) provide immunity against bacteriophage. Part of a type 2 BREX system. Probably a DNA methyltransferase, it methylates phage DNA in vitro in an S-adenosyl-L-methionine-dependent manner. Previously called the phage growth limitation (Pgl) system, it confers protection against bacteriophage phiC31. The bacteria allows one cycle of phage infection, but subsequent cycles are impaired, protecting the original bacterial colony. The system undergoes high rates (10(-3) to 10(-4)) of phase reversion, i.e. loss and regain of phiC31 resistance. When the pglW-pglX-pglY-pglZ genes are transformed into a susceptible S.lividans (strain 1326) they confer resistance to infection by phage phiC31 and phiBT1; all 4 genes are necessary. Functionally, probably a toxic component of a type II toxin-antitoxin (TA) system. The toxic activity is inhibited by its cognate antitoxin PglZ. Its function is as follows. May be a subtypes G and alpha restriction enzyme that recognizes and cleaves an unknown sequence. Methylates an adenine residue in the same sequence. This is Adenine-specific methyltransferase PglX from Streptomyces coelicolor (strain ATCC BAA-471 / A3(2) / M145).